Consider the following 576-residue polypeptide: Plant intracellular Ras-group-related LRR protein 4 (576 aa).

A compositionally biased stretch (low complexity) spans 130 to 151; that stretch reads AAPAAATTTTSTAAAGSSSSSA. Positions 130–181 are disordered; it reads AAPAAATTTTSTAAAGSSSSSAVGNAERHASSGTNGFTASRVAGTSTSTGRV. A compositionally biased stretch (polar residues) spans 160 to 180; it reads SSGTNGFTASRVAGTSTSTGR. 11 LRR repeats span residues 272–295, 296–318, 320–341, 342–364, 366–387, 389–410, 411–433, 434–456, 458–481, 482–503, and 505–527; these read LTGL…IGKL, FSLA…IGDL, SLIY…IGRL, LNLE…IGSL, RLKK…IGHC, SLVE…VGKL, EPLE…MASL, TKLK…FCFA, SLIK…IGNL, EMLE…SFGN, and KHLR…IALK. The short motif at 528-535 is the GVYW; degenerate element; that stretch reads GAQAVVQY.

The protein belongs to the SHOC2 family. In terms of tissue distribution, widely expressed.

Functionally, leucine-rich repeat protein that likely mediates protein interactions, possibly in the context of signal transduction. The polypeptide is Plant intracellular Ras-group-related LRR protein 4 (IRL4) (Oryza sativa subsp. japonica (Rice)).